Here is a 348-residue protein sequence, read N- to C-terminus: Holliday junction branch migration complex subunit RuvB (348 aa).

Residues methionine 1–serine 10 are compositionally biased toward polar residues. Residues methionine 1–leucine 41 are disordered. The large ATPase domain (RuvB-L) stretch occupies residues proline 13 to tyrosine 197. Residues serine 28–leucine 41 are compositionally biased toward basic and acidic residues. Residues leucine 36, arginine 37, glycine 78, lysine 81, threonine 82, threonine 83, arginine 187, tyrosine 197, and arginine 234 each contribute to the ATP site. Threonine 82 provides a ligand contact to Mg(2+). The interval glycine 198 to arginine 269 is small ATPAse domain (RuvB-S). The tract at residues histidine 272–alanine 348 is head domain (RuvB-H). DNA-binding residues include arginine 327 and arginine 332.

It belongs to the RuvB family. As to quaternary structure, homohexamer. Forms an RuvA(8)-RuvB(12)-Holliday junction (HJ) complex. HJ DNA is sandwiched between 2 RuvA tetramers; dsDNA enters through RuvA and exits via RuvB. An RuvB hexamer assembles on each DNA strand where it exits the tetramer. Each RuvB hexamer is contacted by two RuvA subunits (via domain III) on 2 adjacent RuvB subunits; this complex drives branch migration. In the full resolvosome a probable DNA-RuvA(4)-RuvB(12)-RuvC(2) complex forms which resolves the HJ.

It is found in the cytoplasm. The catalysed reaction is ATP + H2O = ADP + phosphate + H(+). The RuvA-RuvB-RuvC complex processes Holliday junction (HJ) DNA during genetic recombination and DNA repair, while the RuvA-RuvB complex plays an important role in the rescue of blocked DNA replication forks via replication fork reversal (RFR). RuvA specifically binds to HJ cruciform DNA, conferring on it an open structure. The RuvB hexamer acts as an ATP-dependent pump, pulling dsDNA into and through the RuvAB complex. RuvB forms 2 homohexamers on either side of HJ DNA bound by 1 or 2 RuvA tetramers; 4 subunits per hexamer contact DNA at a time. Coordinated motions by a converter formed by DNA-disengaged RuvB subunits stimulates ATP hydrolysis and nucleotide exchange. Immobilization of the converter enables RuvB to convert the ATP-contained energy into a lever motion, pulling 2 nucleotides of DNA out of the RuvA tetramer per ATP hydrolyzed, thus driving DNA branch migration. The RuvB motors rotate together with the DNA substrate, which together with the progressing nucleotide cycle form the mechanistic basis for DNA recombination by continuous HJ branch migration. Branch migration allows RuvC to scan DNA until it finds its consensus sequence, where it cleaves and resolves cruciform DNA. The polypeptide is Holliday junction branch migration complex subunit RuvB (Parasynechococcus marenigrum (strain WH8102)).